A 635-amino-acid chain; its full sequence is Biosynthetic arginine decarboxylase (635 aa).

Residue Lys-100 is modified to N6-(pyridoxal phosphate)lysine. Substrate is bound at residue 282 to 292; that stretch reads LDIGGGLGVDY.

Belongs to the Orn/Lys/Arg decarboxylase class-II family. SpeA subfamily. Requires Mg(2+) as cofactor. The cofactor is pyridoxal 5'-phosphate.

The enzyme catalyses L-arginine + H(+) = agmatine + CO2. The protein operates within amine and polyamine biosynthesis; agmatine biosynthesis; agmatine from L-arginine: step 1/1. Functionally, catalyzes the biosynthesis of agmatine from arginine. This Geobacter sp. (strain M21) protein is Biosynthetic arginine decarboxylase.